The primary structure comprises 130 residues: Small ribosomal subunit protein uS8 (130 aa).

Belongs to the universal ribosomal protein uS8 family. In terms of assembly, part of the 30S ribosomal subunit. Contacts proteins S5 and S12.

In terms of biological role, one of the primary rRNA binding proteins, it binds directly to 16S rRNA central domain where it helps coordinate assembly of the platform of the 30S subunit. In Proteus mirabilis (strain HI4320), this protein is Small ribosomal subunit protein uS8.